The sequence spans 861 residues: Probable beta-glucosidase A (861 aa).

An N-terminal signal peptide occupies residues 1–19 (MKLSILEAAALTAASVASA). Asn62, Asn212, and Asn253 each carry an N-linked (GlcNAc...) asparagine glycan. Residue Asp281 is part of the active site. Residues Asn316, Asn323, Asn355, Asn524, Asn543, Asn565, Asn669, and Asn713 are each glycosylated (N-linked (GlcNAc...) asparagine). Positions 735–754 (PEGATDGSPQPRLPASGGPG) are disordered.

This sequence belongs to the glycosyl hydrolase 3 family.

Its subcellular location is the secreted. It carries out the reaction Hydrolysis of terminal, non-reducing beta-D-glucosyl residues with release of beta-D-glucose.. It functions in the pathway glycan metabolism; cellulose degradation. Its function is as follows. Beta-glucosidases are one of a number of cellulolytic enzymes involved in the degradation of cellulosic biomass. Catalyzes the last step releasing glucose from the inhibitory cellobiose. This chain is Probable beta-glucosidase A (bglA), found in Aspergillus terreus.